Consider the following 469-residue polypeptide: Adenosylhomocysteinase (469 aa).

Substrate is bound by residues T63, D139, and E164. 165-167 (TTT) provides a ligand contact to NAD(+). K194 and D198 together coordinate substrate. NAD(+) is bound by residues N199, 228 to 233 (GYGDVG), E251, N300, 321 to 323 (IGH), and N375.

This sequence belongs to the adenosylhomocysteinase family. Requires NAD(+) as cofactor.

It is found in the cytoplasm. The catalysed reaction is S-adenosyl-L-homocysteine + H2O = L-homocysteine + adenosine. The protein operates within amino-acid biosynthesis; L-homocysteine biosynthesis; L-homocysteine from S-adenosyl-L-homocysteine: step 1/1. Its function is as follows. May play a key role in the regulation of the intracellular concentration of adenosylhomocysteine. The chain is Adenosylhomocysteinase from Pseudomonas entomophila (strain L48).